A 409-amino-acid chain; its full sequence is Methylthioribose-1-phosphate isomerase (409 aa).

The Proton donor role is filled by Asp277.

The protein belongs to the eIF-2B alpha/beta/delta subunits family. MtnA subfamily.

The protein localises to the cytoplasm. The protein resides in the nucleus. It carries out the reaction 5-(methylsulfanyl)-alpha-D-ribose 1-phosphate = 5-(methylsulfanyl)-D-ribulose 1-phosphate. The protein operates within amino-acid biosynthesis; L-methionine biosynthesis via salvage pathway; L-methionine from S-methyl-5-thio-alpha-D-ribose 1-phosphate: step 1/6. Functionally, catalyzes the interconversion of methylthioribose-1-phosphate (MTR-1-P) into methylthioribulose-1-phosphate (MTRu-1-P). The chain is Methylthioribose-1-phosphate isomerase from Scheffersomyces stipitis (strain ATCC 58785 / CBS 6054 / NBRC 10063 / NRRL Y-11545) (Yeast).